The chain runs to 353 residues: D-alanine--D-alanine ligase (353 aa).

An ATP-grasp domain is found at 141–349 (KAAFAAAGLP…LEELVSQLVI (209 aa)). 176 to 231 (EAKLKYPCFVKPANLGSSVGISKAQNRNELLIGLDKAASLDRRIVVEQGVSARELE) serves as a coordination point for ATP. Mg(2+) contacts are provided by aspartate 302, glutamate 316, and asparagine 318.

It belongs to the D-alanine--D-alanine ligase family. The cofactor is Mg(2+). Mn(2+) is required as a cofactor.

The protein localises to the cytoplasm. It catalyses the reaction 2 D-alanine + ATP = D-alanyl-D-alanine + ADP + phosphate + H(+). The protein operates within cell wall biogenesis; peptidoglycan biosynthesis. In terms of biological role, cell wall formation. This Prochlorococcus marinus (strain MIT 9303) protein is D-alanine--D-alanine ligase.